The following is a 107-amino-acid chain: Heme-degrading monooxygenase (107 aa).

The 93-residue stretch at 2–94 folds into the ABM domain; it reads IIVTNTAKIT…YILDNKITYY (93 aa). Residue Asn6 participates in Fe cation binding. His76 is a heme binding site.

It belongs to the antibiotic biosynthesis monooxygenase family. Heme-degrading monooxygenase IsdG subfamily. Homodimer.

The protein localises to the cytoplasm. It carries out the reaction heme b + 3 reduced [NADPH--hemoprotein reductase] + 3 O2 = biliverdin IXalpha + CO + Fe(2+) + 3 oxidized [NADPH--hemoprotein reductase] + 3 H2O + H(+). In terms of biological role, allows bacterial pathogens to use the host heme as an iron source. Catalyzes the oxidative degradation of the heme macrocyclic porphyrin ring to the biliverdin in the presence of a suitable electron donor such as ascorbate or NADPH--cytochrome P450 reductase, with subsequent release of free iron. This Bacillus thuringiensis subsp. konkukian (strain 97-27) protein is Heme-degrading monooxygenase.